Consider the following 193-residue polypeptide: Protein B4 (193 aa).

The next 3 helical transmembrane spans lie at 15 to 35, 36 to 56, and 160 to 180; these read FFVC…CVFF, CVYF…VFFV, and LSLC…IVFS.

It localises to the host membrane. This chain is Protein B4 (B4), found in Homo sapiens (Human).